Reading from the N-terminus, the 295-residue chain is Protoheme IX farnesyltransferase (295 aa).

The next 9 membrane-spanning stretches (helical) occupy residues 9–29 (ITKPGIIFGNVLSVAGGFFLA), 36–56 (FGVFLAAVIGTSLVVASGCVF), 80–100 (LVSLKLALLYATLLGIAGVGL), 108–128 (LAALFAVIGFVIYVGLYSLYL), 135–155 (GTLVGSLSGAMPPVIGYCAVS), 163–183 (LTLLVMFSLWQMPHSYAIAIF), 209–229 (IMLYILAFLVATLMLTVGGYA), 230–250 (GLNYLAVAAGMGMYWLYMAWK), and 265–285 (FVFSIFTITALSVMMSVDFQV).

It belongs to the UbiA prenyltransferase family. Protoheme IX farnesyltransferase subfamily.

Its subcellular location is the cell inner membrane. It carries out the reaction heme b + (2E,6E)-farnesyl diphosphate + H2O = Fe(II)-heme o + diphosphate. The protein operates within porphyrin-containing compound metabolism; heme O biosynthesis; heme O from protoheme: step 1/1. Its function is as follows. Converts heme B (protoheme IX) to heme O by substitution of the vinyl group on carbon 2 of heme B porphyrin ring with a hydroxyethyl farnesyl side group. The polypeptide is Protoheme IX farnesyltransferase (Pseudomonas syringae pv. syringae (strain B728a)).